Consider the following 249-residue polypeptide: Isoprenyl transferase (249 aa).

Residue D25 is part of the active site. D25 is a Mg(2+) binding site. Residues 26-29 (GNGR), W30, R38, H42, and 70-72 (STE) contribute to the substrate site. N73 functions as the Proton acceptor in the catalytic mechanism. Residues W74, R76, R197, and 203–205 (RLS) each bind substrate. Residue E216 coordinates Mg(2+).

This sequence belongs to the UPP synthase family. Homodimer. It depends on Mg(2+) as a cofactor.

Its function is as follows. Catalyzes the condensation of isopentenyl diphosphate (IPP) with allylic pyrophosphates generating different type of terpenoids. This is Isoprenyl transferase from Streptococcus pyogenes serotype M3 (strain ATCC BAA-595 / MGAS315).